The following is a 277-amino-acid chain: Probable septum site-determining protein MinC (277 aa).

Residues 107-168 (TEGLLPGRKG…ESGPQVSHYD (62 aa)) are disordered. Residues 122–142 (GKPDGKAAEGRAPDHGTEGRA) are compositionally biased toward basic and acidic residues.

It belongs to the MinC family. As to quaternary structure, interacts with MinD and FtsZ.

In terms of biological role, cell division inhibitor that blocks the formation of polar Z ring septums. Rapidly oscillates between the poles of the cell to destabilize FtsZ filaments that have formed before they mature into polar Z rings. Prevents FtsZ polymerization. The protein is Probable septum site-determining protein MinC of Mesorhizobium japonicum (strain LMG 29417 / CECT 9101 / MAFF 303099) (Mesorhizobium loti (strain MAFF 303099)).